Consider the following 240-residue polypeptide: MATPSTQTTDPKPANADLSDPNRAPSLEDLKKIKYESTTTAVATPAEIQLLGDLFKKLGLDANSVAPAMWDLARAYADVQASRSAVLSGTTPSNPAITRQALARQFYVINITPRQFCMYFAKVVWNLLLDSNVPPAGWAKQGLPDDCKFAGFDFFEGVLSPAALDPADGLIRPPSQREIQAHSTAKYGALARQRYRMETSFPPWLKSLTVGSAVSTPCTPLKHLQNCNRNTSKLKLVCGL.

Positions 1–10 (MATPSTQTTD) are enriched in polar residues. Residues 1 to 27 (MATPSTQTTDPKPANADLSDPNRAPSL) are disordered.

This sequence belongs to the potexvirus capsid protein family.

It localises to the virion. Required for genome encapsidation. Forms ribonucleoprotein complexes along with TGB1 helicase and viral RNA. This chain is Coat protein, found in Narcissus pseudonarcissus (Daffodil).